A 124-amino-acid chain; its full sequence is Probable glycine cleavage system H protein (124 aa).

One can recognise a Lipoyl-binding domain in the interval 22–104 (TGRVGISEFA…FGDGWLVEID (83 aa)). Lysine 63 carries the N6-lipoyllysine modification.

The protein belongs to the GcvH family. The glycine cleavage system is composed of four proteins: P, T, L and H. (R)-lipoate is required as a cofactor.

Its function is as follows. The glycine cleavage system catalyzes the degradation of glycine. The H protein shuttles the methylamine group of glycine from the P protein to the T protein. The sequence is that of Probable glycine cleavage system H protein from Halobacterium salinarum (strain ATCC 700922 / JCM 11081 / NRC-1) (Halobacterium halobium).